We begin with the raw amino-acid sequence, 609 residues long: Dihydroxy-acid dehydratase (609 aa).

Residue Asp82 coordinates Mg(2+). [2Fe-2S] cluster is bound at residue Cys123. Positions 124 and 125 each coordinate Mg(2+). Residue Lys125 is modified to N6-carboxylysine. [2Fe-2S] cluster is bound at residue Cys192. Position 489 (Glu489) interacts with Mg(2+). Ser515 serves as the catalytic Proton acceptor.

The protein belongs to the IlvD/Edd family. Homodimer. [2Fe-2S] cluster serves as cofactor. It depends on Mg(2+) as a cofactor.

It catalyses the reaction (2R)-2,3-dihydroxy-3-methylbutanoate = 3-methyl-2-oxobutanoate + H2O. It carries out the reaction (2R,3R)-2,3-dihydroxy-3-methylpentanoate = (S)-3-methyl-2-oxopentanoate + H2O. It participates in amino-acid biosynthesis; L-isoleucine biosynthesis; L-isoleucine from 2-oxobutanoate: step 3/4. It functions in the pathway amino-acid biosynthesis; L-valine biosynthesis; L-valine from pyruvate: step 3/4. Its function is as follows. Functions in the biosynthesis of branched-chain amino acids. Catalyzes the dehydration of (2R,3R)-2,3-dihydroxy-3-methylpentanoate (2,3-dihydroxy-3-methylvalerate) into 2-oxo-3-methylpentanoate (2-oxo-3-methylvalerate) and of (2R)-2,3-dihydroxy-3-methylbutanoate (2,3-dihydroxyisovalerate) into 2-oxo-3-methylbutanoate (2-oxoisovalerate), the penultimate precursor to L-isoleucine and L-valine, respectively. This Azobacteroides pseudotrichonymphae genomovar. CFP2 protein is Dihydroxy-acid dehydratase.